The primary structure comprises 618 residues: F-box/LRR-repeat protein At3g58940 (618 aa).

Residues 1–47 (MDRVSNLPEEVRCHILSFLPTKHAALTSVLSKSWLNLWKFETNLDID) form the F-box domain. LRR repeat units lie at residues 147–176 (LKLR…NIDS), 196–223 (EVHM…SIHG), 224–249 (TGVE…NYSD), 282–313 (TLYL…GLKS), 314–339 (DEGR…IIEG), and 354–379 (CISR…GFRG). The disordered stretch occupies residues 587-618 (ATDSERAETSSNQEMTELGQATATYFPPREGE). Over residues 595–609 (TSSNQEMTELGQATA) the composition is skewed to polar residues.

This chain is F-box/LRR-repeat protein At3g58940, found in Arabidopsis thaliana (Mouse-ear cress).